Here is a 200-residue protein sequence, read N- to C-terminus: Small ribosomal subunit protein uS4 (200 aa).

Residues T22 to K43 are disordered. An S4 RNA-binding domain is found at S92–K152.

Belongs to the universal ribosomal protein uS4 family. As to quaternary structure, part of the 30S ribosomal subunit. Contacts protein S5. The interaction surface between S4 and S5 is involved in control of translational fidelity.

One of the primary rRNA binding proteins, it binds directly to 16S rRNA where it nucleates assembly of the body of the 30S subunit. Functionally, with S5 and S12 plays an important role in translational accuracy. The polypeptide is Small ribosomal subunit protein uS4 (Geobacillus sp. (strain WCH70)).